Consider the following 214-residue polypeptide: Methylthioribulose-1-phosphate dehydratase (214 aa).

Residues His103 and His105 each coordinate Zn(2+).

It belongs to the aldolase class II family. MtnB subfamily. Requires Zn(2+) as cofactor.

It carries out the reaction 5-(methylsulfanyl)-D-ribulose 1-phosphate = 5-methylsulfanyl-2,3-dioxopentyl phosphate + H2O. Its pathway is amino-acid biosynthesis; L-methionine biosynthesis via salvage pathway; L-methionine from S-methyl-5-thio-alpha-D-ribose 1-phosphate: step 2/6. Its function is as follows. Catalyzes the dehydration of methylthioribulose-1-phosphate (MTRu-1-P) into 2,3-diketo-5-methylthiopentyl-1-phosphate (DK-MTP-1-P). This is Methylthioribulose-1-phosphate dehydratase from Granulibacter bethesdensis (strain ATCC BAA-1260 / CGDNIH1).